The following is a 562-amino-acid chain: MNTNDAKEYLARRDIPQLFESLLNGLMCSKPEDPIEYLETCLQKVKELGGCDKVKWDTFVSQEKKTLPPLNGGQSRRSFLRNVMPENSNFPYRRYDRLPPIHQFSIESDTDLSETAELIEEYEVFDPTRPRPKIILVIGGPGSGKGTQSLKIAERYGFQYISVGELLRKKIHSASSNRKWSLIAKIITNGELAPQETTITEIKQKLMQIPDEEGIVIDGFPRDVAQALSFEDQICTPDLVVFLACANQRLKERLQKRAEQQGRPDDNLKATQRRLVNFKQNAAPLVKYFQEKGLIVTFDADRDEDAVFHDISVAVDSKLFPNKEAPMDSSDLDPSMMFDAGEIIDTGSDYDNQDDDQLNVFGEDTEGGFMEDLRKCKIIFLMGGPGSGKGTQCEKLAEKYGFTHLSTGELLRQELTSESERSKLIRDIMERGDLVPSGVVLELLKEAMVASLGNTKGFLIDGYPREVKQGEEFGRRIGDPHLVICMDCSADTMTNRLLQRSQSSQRGEDGAKSIAKRLEAYHRASIPVVTYYERKTQLRKVNAEGTPEQVFLQLCTAIDSVF.

2 adenylate kinase regions span residues 133-316 (KIIL…VAVD) and 377-559 (KIIF…TAID). 142 to 147 (GSGKGT) serves as a coordination point for ATP. The segment at 162 to 193 (SVGELLRKKIHSASSNRKWSLIAKIITNGELA) is NMP 1. Residues Arg-168, 191-193 (ELA), 219-222 (GFPR), and Gln-226 contribute to the AMP site. The segment at 256-266 (KRAEQQGRPDD) is LID 1. Arg-257 contributes to the ATP binding site. AMP is bound by residues Arg-263 and Arg-274. 386–391 (GSGKGT) serves as a coordination point for ATP. The NMP 2 stretch occupies residues 406–435 (STGELLRQELTSESERSKLIRDIMERGDLV). AMP contacts are provided by residues Thr-407, Arg-412, 433–435 (DLV), 462–465 (GYPR), and Gln-469. Residues 499 to 509 (QRSQSSQRGED) form an LID 2 region. Residue Arg-500 participates in ATP binding. AMP is bound by residues Arg-506 and Arg-517. Gly-545 serves as a coordination point for ATP.

Belongs to the adenylate kinase family. Monomer. Interacts with YWHAZ. As to expression, brain specific.

The protein localises to the cytoplasm. It catalyses the reaction AMP + ATP = 2 ADP. The enzyme catalyses a 2'-deoxyribonucleoside 5'-diphosphate + ATP = a 2'-deoxyribonucleoside 5'-triphosphate + ADP. It carries out the reaction a ribonucleoside 5'-diphosphate + ATP = a ribonucleoside 5'-triphosphate + ADP. In terms of biological role, nucleoside monophosphate (NMP) kinase that catalyzes the reversible transfer of the terminal phosphate group between nucleoside triphosphates and monophosphates. Active on AMP and dAMP with ATP as a donor. When GTP is used as phosphate donor, the enzyme phosphorylates AMP, CMP, and to a small extent dCMP. Also displays broad nucleoside diphosphate kinase activity. The chain is Adenylate kinase isoenzyme 5 (Ak5) from Mus musculus (Mouse).